We begin with the raw amino-acid sequence, 367 residues long: Germination protease (367 aa).

A propeptide spanning residues 1 to 15 is cleaved from the precursor; that stretch reads MKEPLDLSKYSIRTD.

Belongs to the peptidase A25 family. Homotetramer. In terms of processing, autoproteolytically processed. The inactive tetrameric zymogen termed p46 autoprocesses to a smaller form termed p41, which is active only during spore germination.

The enzyme catalyses Endopeptidase action with P4 Glu or Asp, P1 preferably Glu &gt; Asp, P1' hydrophobic and P2' Ala.. Initiates the rapid degradation of small, acid-soluble proteins during spore germination. The polypeptide is Germination protease (Bacillus cereus (strain ATCC 14579 / DSM 31 / CCUG 7414 / JCM 2152 / NBRC 15305 / NCIMB 9373 / NCTC 2599 / NRRL B-3711)).